A 312-amino-acid chain; its full sequence is Coiled-coil domain-containing protein 160 homolog (312 aa).

A coiled-coil region spans residues 126-281 (SEGAKFKNQL…EERKREKTHS (156 aa)).

Belongs to the CCDC160 family.

This chain is Coiled-coil domain-containing protein 160 homolog, found in Xenopus tropicalis (Western clawed frog).